The chain runs to 486 residues: MGTNDLDIEEGTLEIGMEYRTVSGVAGPLVILDKVKGPKYQEIVNIRLGDGSTRRGQVLEVDGEKAVVQVFEGTSGIDNKFTTVQFTGEVLKTPVSLDMLGRIFNGSGKPIDNGPPILPEAYLDISGSSINPSERTYPEEMIQTGISTIDVMNSIARGQKIPLFSAAGLPHNEIAAQICRQAGLVKRLEKTVDLLEDHGEDNFAIVFAAMGVNMETAQFFKRDFEENGSMERVTLFLNLANDPTIERIITPRIALTTAEYLAYECGKHVLVILTDMSSYADALREVSAAREEVPGRRGYPGYMYTDLATIYERAGRIEGRKGSITQIPILTMPNDDITHPTPDLTGYITEGQIYIDRQLHNRQIYPPINVLPSLSRLMKSAIGEGMTRKDHSDVSNQLYANYAIGKDVQAMKAVVGEEALSSEDLLYLEFLDKFERKFVMQGAYDTRNIFQSLDLAWTLLRIFPRELLHRIPAKTLDQFYSRDSTS.

Gly2 carries the N-acetylglycine modification.

It belongs to the ATPase alpha/beta chains family. In terms of assembly, V-ATPase is a heteromultimeric enzyme composed of a peripheral catalytic V1 complex (components A to H) attached to an integral membrane V0 proton pore complex (components: a, c, c'', d and e).

It is found in the vacuole membrane. Functionally, non-catalytic subunit of the peripheral V1 complex of vacuolar ATPase. V-ATPase is responsible for acidifying a variety of intracellular compartments in eukaryotic cells. The polypeptide is V-type proton ATPase subunit B1 (VHA-B1) (Arabidopsis thaliana (Mouse-ear cress)).